A 364-amino-acid chain; its full sequence is Capsular polysaccharide phosphotransferase cps1A (364 aa).

This sequence belongs to the stealth family.

Its function is as follows. Part of a capsular polysaccharide synthesis locus. The protein is Capsular polysaccharide phosphotransferase cps1A (cps1A) of Actinobacillus pleuropneumoniae (Haemophilus pleuropneumoniae).